Consider the following 108-residue polypeptide: ATP synthase peripheral stalk subunit F6, mitochondrial (108 aa).

The N-terminal 32 residues, 1-32 (MILQRLFRLSSAVQSAISVSWRRNIGITAVAF), are a transit peptide targeting the mitochondrion. K41, K46, and K79 each carry N6-acetyllysine. N6-acetyllysine; alternate occurs at positions 84 and 99. An N6-succinyllysine; alternate mark is found at K84 and K99. Residue K105 is modified to N6-acetyllysine. A Phosphoserine modification is found at S108.

Belongs to the eukaryotic ATPase subunit F6 family. In terms of assembly, component of the ATP synthase complex composed at least of ATP5F1A/subunit alpha, ATP5F1B/subunit beta, ATP5MC1/subunit c (homooctomer), MT-ATP6/subunit a, MT-ATP8/subunit 8, ATP5ME/subunit e, ATP5MF/subunit f, ATP5MG/subunit g, ATP5MK/subunit k, ATP5MJ/subunit j, ATP5F1C/subunit gamma, ATP5F1D/subunit delta, ATP5F1E/subunit epsilon, ATP5PF/subunit F6, ATP5PB/subunit b, ATP5PD/subunit d, ATP5PO/subunit OSCP. ATP synthase complex consists of a soluble F(1) head domain (subunits alpha(3) and beta(3)) - the catalytic core - and a membrane F(0) domain - the membrane proton channel (subunits c, a, 8, e, f, g, k and j). These two domains are linked by a central stalk (subunits gamma, delta, and epsilon) rotating inside the F1 region and a stationary peripheral stalk (subunits F6, b, d, and OSCP).

The protein localises to the mitochondrion. It localises to the mitochondrion inner membrane. Functionally, subunit F6, of the mitochondrial membrane ATP synthase complex (F(1)F(0) ATP synthase or Complex V) that produces ATP from ADP in the presence of a proton gradient across the membrane which is generated by electron transport complexes of the respiratory chain. ATP synthase complex consist of a soluble F(1) head domain - the catalytic core - and a membrane F(1) domain - the membrane proton channel. These two domains are linked by a central stalk rotating inside the F(1) region and a stationary peripheral stalk. During catalysis, ATP synthesis in the catalytic domain of F(1) is coupled via a rotary mechanism of the central stalk subunits to proton translocation. In vivo, can only synthesize ATP although its ATP hydrolase activity can be activated artificially in vitro. Part of the complex F(0) domain. Part of the complex F(0) domain and the peripheric stalk, which acts as a stator to hold the catalytic alpha(3)beta(3) subcomplex and subunit a/ATP6 static relative to the rotary elements. The protein is ATP synthase peripheral stalk subunit F6, mitochondrial of Bos taurus (Bovine).